Here is a 259-residue protein sequence, read N- to C-terminus: DNA utilization protein HofM (259 aa).

Its function is as follows. Required for the use of extracellular DNA as a nutrient. The sequence is that of DNA utilization protein HofM (hofM) from Escherichia coli (strain K12).